Consider the following 80-residue polypeptide: Ubiquitin-like protein NEDD8-like protein 2 (80 aa).

The protein belongs to the ubiquitin family.

In Dictyostelium discoideum (Social amoeba), this protein is Ubiquitin-like protein NEDD8-like protein 2 (nedd8l2).